Here is a 141-residue protein sequence, read N- to C-terminus: Large ribosomal subunit protein uL11 (141 aa).

This sequence belongs to the universal ribosomal protein uL11 family. Part of the ribosomal stalk of the 50S ribosomal subunit. Interacts with L10 and the large rRNA to form the base of the stalk. L10 forms an elongated spine to which L12 dimers bind in a sequential fashion forming a multimeric L10(L12)X complex. Post-translationally, one or more lysine residues are methylated.

Its function is as follows. Forms part of the ribosomal stalk which helps the ribosome interact with GTP-bound translation factors. The protein is Large ribosomal subunit protein uL11 of Clostridium tetani (strain Massachusetts / E88).